The primary structure comprises 196 residues: Chromophore lyase CpcT/CpeT (196 aa).

Belongs to the CpcT/CpeT biliprotein lyase family.

Covalently attaches a chromophore to Cys residue(s) of phycobiliproteins. The sequence is that of Chromophore lyase CpcT/CpeT from Thermosynechococcus vestitus (strain NIES-2133 / IAM M-273 / BP-1).